The primary structure comprises 169 residues: S-ribosylhomocysteine lyase (169 aa).

Fe cation contacts are provided by His54, His58, and Cys128.

The protein belongs to the LuxS family. In terms of assembly, homodimer. Fe cation is required as a cofactor.

The catalysed reaction is S-(5-deoxy-D-ribos-5-yl)-L-homocysteine = (S)-4,5-dihydroxypentane-2,3-dione + L-homocysteine. Its function is as follows. Involved in the synthesis of autoinducer 2 (AI-2) which is secreted by bacteria and is used to communicate both the cell density and the metabolic potential of the environment. The regulation of gene expression in response to changes in cell density is called quorum sensing. Catalyzes the transformation of S-ribosylhomocysteine (RHC) to homocysteine (HC) and 4,5-dihydroxy-2,3-pentadione (DPD). The sequence is that of S-ribosylhomocysteine lyase from Shewanella piezotolerans (strain WP3 / JCM 13877).